We begin with the raw amino-acid sequence, 274 residues long: Membrane protein insertase YidC 2 (274 aa).

An N-terminal signal peptide occupies residues 1-20 (MKKKLKLTSLLGLSLLIMTA). The N-palmitoyl cysteine moiety is linked to residue Cys-21. Cys-21 is lipidated: S-diacylglycerol cysteine. 4 consecutive transmembrane segments (helical) span residues 56–76 (ISIGVGIILFTVLIRTVLLPV), 128–148 (SDSLWPILIQMPVILALFQAL), 167–187 (VDTTLVLPILAAVFTFLSTWL), and 205–225 (GIPVLIFIFAVYAPGGVALYW).

It belongs to the OXA1/ALB3/YidC family. Type 2 subfamily.

Its subcellular location is the cell membrane. Functionally, required for the insertion and/or proper folding and/or complex formation of integral membrane proteins into the membrane. Involved in integration of membrane proteins that insert both dependently and independently of the Sec translocase complex, as well as at least some lipoproteins. The sequence is that of Membrane protein insertase YidC 2 from Streptococcus pneumoniae serotype 4 (strain ATCC BAA-334 / TIGR4).